We begin with the raw amino-acid sequence, 159 residues long: Ribosomal RNA large subunit methyltransferase H (159 aa).

S-adenosyl-L-methionine contacts are provided by residues Leu-76, Gly-108, and 127–132; that span reads LSKMTF.

This sequence belongs to the RNA methyltransferase RlmH family. As to quaternary structure, homodimer.

It is found in the cytoplasm. It carries out the reaction pseudouridine(1915) in 23S rRNA + S-adenosyl-L-methionine = N(3)-methylpseudouridine(1915) in 23S rRNA + S-adenosyl-L-homocysteine + H(+). Specifically methylates the pseudouridine at position 1915 (m3Psi1915) in 23S rRNA. The polypeptide is Ribosomal RNA large subunit methyltransferase H (Ureaplasma urealyticum serovar 10 (strain ATCC 33699 / Western)).